The chain runs to 94 residues: Small ribosomal subunit protein bS20 (94 aa).

A compositionally biased stretch (basic and acidic residues) spans 1–10 (MANHASADKR). A disordered region spans residues 1–20 (MANHASADKRNRQRITRTAR). Positions 11-20 (NRQRITRTAR) are enriched in basic residues.

Belongs to the bacterial ribosomal protein bS20 family.

Functionally, binds directly to 16S ribosomal RNA. The chain is Small ribosomal subunit protein bS20 from Sorangium cellulosum (strain So ce56) (Polyangium cellulosum (strain So ce56)).